Reading from the N-terminus, the 1048-residue chain is Dyslexia-associated protein KIAA0319-like protein (1048 aa).

Residues 1-29 lie on the Cytoplasmic side of the membrane; sequence MEKRLGVKPSPASWVLPGYCWQTSVKLPR. The chain crosses the membrane as a helical span at residues 30–50; sequence SLYLLYSFFCFSVLWLSTDAD. Residues 49–127 enclose the MANSC domain; sequence ADESRCQQGK…PFRTDSSNSM (79 aa). Residues 51–928 are Extracellular-facing; the sequence is ESRCQQGKTL…RDGDSNCEWS (878 aa). 2 disordered regions span residues 198–218 and 231–300; these read HGAM…LSPT and SFTS…STSA. A compositionally biased stretch (polar residues) spans 231-241; sequence SFTSNHTTQTP. Asparagine 246 carries an N-linked (GlcNAc...) asparagine glycan. 2 stretches are compositionally biased toward low complexity: residues 247–261 and 287–300; these read VSIH…SPVS and ATPT…STSA. PKD domains follow at residues 309–400, 408–497, 503–593, 599–687, and 693–784; these read VVSA…VKPE, VAVV…VNKA, VANA…VQPE, QADA…VKEE, and VAKI…VKPD. The N-linked (GlcNAc...) asparagine glycan is linked to asparagine 394. A disordered region spans residues 593–623; that stretch reads ENNKPPQADAGPDKELTLPVDSTTLDGSKST. A helical transmembrane segment spans residues 929 to 949; sequence VLYVIIASFVIVVALGILSWT. The Cytoplasmic portion of the chain corresponds to 950–1048; it reads TICCCKRQKG…KSRSAREEIL (99 aa). Threonine 973 carries the phosphothreonine modification. Serine 977 bears the Phosphoserine mark. A disordered region spans residues 980 to 1007; that stretch reads LKPTSRAGSKQKGPTLSSSLMHSESELD. Residues 985–994 are compositionally biased toward polar residues; the sequence is RAGSKQKGPT. 2 positions are modified to phosphoserine: serine 1008 and serine 1030. Positions 1024–1048 are disordered; sequence LYGQNGSVPNGQTPLKSRSAREEIL. Positions 1027–1039 are enriched in polar residues; the sequence is QNGSVPNGQTPLK. Residue threonine 1036 is modified to Phosphothreonine.

Interacts with RTN4R. Post-translationally, N-glycosylated.

It localises to the cytoplasmic granule membrane. The protein resides in the golgi apparatus membrane. It is found in the golgi apparatus. The protein localises to the trans-Golgi network membrane. Its subcellular location is the cell membrane. Its function is as follows. Possible role in axon guidance through interaction with RTN4R. Functionally, (Microbial infection) Acts as a receptor for adeno-associated virus and is involved in adeno-associated virus infection through endocytosis system. The sequence is that of Dyslexia-associated protein KIAA0319-like protein from Mus musculus (Mouse).